Reading from the N-terminus, the 509-residue chain is 2-isopropylmalate synthase (509 aa).

The Pyruvate carboxyltransferase domain maps to Ile5 to Lys267. Mn(2+) is bound by residues Asp14, His202, His204, and Asn238. The interval Lys391–Asn509 is regulatory domain.

The protein belongs to the alpha-IPM synthase/homocitrate synthase family. LeuA type 1 subfamily. Homodimer. The cofactor is Mn(2+).

Its subcellular location is the cytoplasm. The catalysed reaction is 3-methyl-2-oxobutanoate + acetyl-CoA + H2O = (2S)-2-isopropylmalate + CoA + H(+). Its pathway is amino-acid biosynthesis; L-leucine biosynthesis; L-leucine from 3-methyl-2-oxobutanoate: step 1/4. In terms of biological role, catalyzes the condensation of the acetyl group of acetyl-CoA with 3-methyl-2-oxobutanoate (2-ketoisovalerate) to form 3-carboxy-3-hydroxy-4-methylpentanoate (2-isopropylmalate). The sequence is that of 2-isopropylmalate synthase from Staphylococcus aureus (strain Mu3 / ATCC 700698).